The sequence spans 326 residues: Thioredoxin reductase (326 aa).

FAD is bound at residue 55-62 (EGPEPGGQ). Residues Cys156 and Cys159 are joined by a disulfide bond. 298-307 (DVSNKLYAQA) is an FAD binding site.

It belongs to the class-II pyridine nucleotide-disulfide oxidoreductase family. Homodimer. Requires FAD as cofactor.

Its subcellular location is the cytoplasm. The enzyme catalyses [thioredoxin]-dithiol + NADP(+) = [thioredoxin]-disulfide + NADPH + H(+). The sequence is that of Thioredoxin reductase (trxB) from Borreliella burgdorferi (strain ATCC 35210 / DSM 4680 / CIP 102532 / B31) (Borrelia burgdorferi).